The following is a 156-amino-acid chain: Small ribosomal subunit protein uS7 (156 aa).

The protein belongs to the universal ribosomal protein uS7 family. As to quaternary structure, part of the 30S ribosomal subunit. Contacts proteins S9 and S11.

One of the primary rRNA binding proteins, it binds directly to 16S rRNA where it nucleates assembly of the head domain of the 30S subunit. Is located at the subunit interface close to the decoding center, probably blocks exit of the E-site tRNA. In Caldanaerobacter subterraneus subsp. tengcongensis (strain DSM 15242 / JCM 11007 / NBRC 100824 / MB4) (Thermoanaerobacter tengcongensis), this protein is Small ribosomal subunit protein uS7.